A 489-amino-acid polypeptide reads, in one-letter code: Ribulose-1,5 bisphosphate carboxylase/oxygenase large subunit N-methyltransferase, chloroplastic (489 aa).

The N-terminal 37 residues, 1–37 (MATIFSGGSVSPFLFHTNKGTSFTPKAPILHLKRSFS), are a transit peptide targeting the chloroplast. An SET domain is found at 64–288 (EGVITAKTPV…AGEQVYIQYD (225 aa)). Residues 80 to 82 (EGL) and R222 contribute to the S-adenosyl-L-methionine site. Residues R222, R226, and D239 each contribute to the substrate site. Residue 242-243 (NH) coordinates S-adenosyl-L-methionine. Substrate-binding residues include Y254, Y287, and Y300.

It belongs to the class V-like SAM-binding methyltransferase superfamily. Plant protein-lysine LSMT methyltransferase family. In terms of assembly, homotrimer. As to expression, highly expressed in leaf.

The protein localises to the plastid. The protein resides in the chloroplast. It catalyses the reaction L-lysyl-[ribulose-1,5-bisphosphate carboxylase] + 3 S-adenosyl-L-methionine = N(6),N(6),N(6)-trimethyl-L-lysyl-[ribulose-1,5-bisphosphate carboxylase] + 3 S-adenosyl-L-homocysteine + 3 H(+). It carries out the reaction [fructose-bisphosphate aldolase]-L-lysine + 3 S-adenosyl-L-methionine = [fructose-bisphosphate aldolase]-N(6),N(6),N(6)-trimethyl-L-lysine + 3 S-adenosyl-L-homocysteine + 3 H(+). Functionally, methylates 'Lys-14' of the large subunit of RuBisCO. Can also use with lower efficiency chloroplastic fructose-bisphosphate aldolases and gamma-tocopherol methyltransferase as substrates, but not a cytosolic aldolase. The chain is Ribulose-1,5 bisphosphate carboxylase/oxygenase large subunit N-methyltransferase, chloroplastic (RBCMT) from Pisum sativum (Garden pea).